Here is a 422-residue protein sequence, read N- to C-terminus: Histidine--tRNA ligase (422 aa).

This sequence belongs to the class-II aminoacyl-tRNA synthetase family. Homodimer.

The protein resides in the cytoplasm. It carries out the reaction tRNA(His) + L-histidine + ATP = L-histidyl-tRNA(His) + AMP + diphosphate + H(+). The sequence is that of Histidine--tRNA ligase from Mycolicibacterium vanbaalenii (strain DSM 7251 / JCM 13017 / BCRC 16820 / KCTC 9966 / NRRL B-24157 / PYR-1) (Mycobacterium vanbaalenii).